We begin with the raw amino-acid sequence, 143 residues long: Cofilin (143 aa).

Serine 4 carries the post-translational modification Phosphoserine. One can recognise an ADF-H domain in the interval 5–137; it reads GVAVADESLT…SYDSVLERVS (133 aa).

It belongs to the actin-binding proteins ADF family. In terms of assembly, interacts with actin and AIP1 in a ternary complex. Post-translationally, the N-terminus is blocked.

The protein resides in the cytoplasm. The protein localises to the cytoskeleton. It is found in the nucleus matrix. Controls reversibly actin polymerization and depolymerization in a pH-sensitive manner. It has the ability to bind G- and F-actin in a 1:1 ratio of cofilin to actin. Binding to F-actin is regulated by tropomyosin. It is the major component of intranuclear and cytoplasmic actin rods. Required for accumulation of actin at the cell division site via depolymerizing actin at the cell ends. In association with myosin II has a role in the assembly of the contractile ring via severing actin filaments. Involved in the maintenance of the contractile ring once formed. In association with profilin and capping protein, has a role in the mitotic reorganization of the actin cytoskeleton. In effect, yeast cofilin increases the rate of actin polymerization by making new ends available for actin subunit addition. Such a protein complex is important for the polarized growth of yeast cells. The polypeptide is Cofilin (COF1) (Saccharomyces cerevisiae (strain ATCC 204508 / S288c) (Baker's yeast)).